Here is a 921-residue protein sequence, read N- to C-terminus: Protein translocase subunit SecA (921 aa).

ATP is bound by residues glutamine 86, 104–108 (GEGKT), and aspartate 497. The span at 829–838 (QQAPQQQPQQ) shows a compositional bias: low complexity. Residues 829–921 (QQAPQQQPQQ…CHGAIETQKA (93 aa)) form a disordered region. Positions 839 to 855 (VAPPPRPQPPQPAPQPP) are enriched in pro residues. Positions 901, 903, 912, and 913 each coordinate Zn(2+).

Belongs to the SecA family. As to quaternary structure, monomer and homodimer. Part of the essential Sec protein translocation apparatus which comprises SecA, SecYEG and auxiliary proteins SecDF-YajC and YidC. It depends on Zn(2+) as a cofactor.

It is found in the cell inner membrane. The protein resides in the cytoplasm. The catalysed reaction is ATP + H2O + cellular proteinSide 1 = ADP + phosphate + cellular proteinSide 2.. Its function is as follows. Part of the Sec protein translocase complex. Interacts with the SecYEG preprotein conducting channel. Has a central role in coupling the hydrolysis of ATP to the transfer of proteins into and across the cell membrane, serving both as a receptor for the preprotein-SecB complex and as an ATP-driven molecular motor driving the stepwise translocation of polypeptide chains across the membrane. This Hyphomonas neptunium (strain ATCC 15444) protein is Protein translocase subunit SecA.